The chain runs to 464 residues: Sushi repeat-containing protein SRPX (464 aa).

Residues Met1 to Ser28 form the signal peptide. Ser34 carries an O-linked (Xyl...) (chondroitin sulfate) serine glycan. 5 disulfide bridges follow: Cys57–Cys85, Cys69–Cys103, Cys89–Cys115, Cys120–Cys161, and Cys147–Cys174. 2 consecutive Sushi domains span residues Cys57 to Gln117 and Lys118 to Asp176. The 83-residue stretch at Met177 to Val259 folds into the HYR domain. The Sushi 3 domain occupies Arg260–Ala319. 2 disulfides stabilise this stretch: Cys262–Cys304 and Cys290–Cys317.

Normal cells and cells transformed by human papillomavirus type 16 E6E7 and polyomavirus large T. Suppressed in cells transformed by oncogenes such as V-SRC, V-ABL, V-FPS, V-MOS, V-SIS, V-K-RAS, and polyomavirus middle T.

The chain is Sushi repeat-containing protein SRPX (Srpx) from Rattus norvegicus (Rat).